Here is a 395-residue protein sequence, read N- to C-terminus: Zinc-regulated GTPase metalloprotein activator 1E (395 aa).

The segment at 1–22 is disordered; that stretch reads MLPAVGSVDEEEDPAEEDCPEL. Residues 8 to 20 are compositionally biased toward acidic residues; the sequence is VDEEEDPAEEDCP. The psi-PxLVp motif motif lies at 17 to 24; that stretch reads EDCPELVP. Residue 49–56 participates in GTP binding; the sequence is GYLGAGKT. The Zn(2+) site is built by C107, C109, and C110. Residues 107–110 carry the CXCC motif motif; the sequence is CLCC. Residues 110 to 114 and 203 to 206 contribute to the GTP site; these read CSVKD and NKTD. Residues 274-377 form the CobW C-terminal domain; the sequence is IVTITFEVPG…ILKQLFIATV (104 aa).

It belongs to the SIMIBI class G3E GTPase family. ZNG1 subfamily.

It is found in the nucleus. The catalysed reaction is GTP + H2O = GDP + phosphate + H(+). Zinc chaperone that directly transfers zinc cofactor to target metalloproteins, thereby activating them. Catalyzes zinc insertion into the active site of methionine aminopeptidase METAP1, which function to cleave the initiator methionine from polypeptides during or after protein translation. Mechanistically, the N-terminal psi-PxLVp motif binds to the C6H2-type zinc finger of inactive form of METAP1. After formation of the docked complex, zinc is transferred from the CXCC motif in the GTPase domain of ZNG1E to the zinc binding site in the peptidase domain of METAP1 in a process requiring GTP hydrolysis. GTP/GDP exchange is required for release of active METAP1. The sequence is that of Zinc-regulated GTPase metalloprotein activator 1E from Homo sapiens (Human).